A 767-amino-acid polypeptide reads, in one-letter code: MALSHSLGFPRIGRDRELKKALEAHWKGELDEAGLRAVGQRLRAEHWQLQKDAGIDLLPVGDFAWYDQVLAHSLAFDVIPERFRPAAGKPTLDTLFAMARGAVANKSGGSCCGGAHAQEMTKWFDTNYHYLVPEFSADQQFALSWEQLFEEVAEAHALGHSVKPVLIGPLTYLWLGKEKGSDFDRLDLLERLLPVYGEIFQRLAAQGVEWVQIDEPILVLDLPQAWKNAFERAYNLIQREPCKKLIATYFGGLEDNLGLAANLPVDGLHIDLVRAPEQYPTILDRLPAYKVLSLGMVNGRNVWRCDLEKVLELLRHAHERLGERLWVAPSCSLLHSPVDLEREDQLDAELKSWLAFAVQKCQEVALLGRALEAPDDASVQAALEQSRVVRAARAASTRIHKPEVQARLAAIRPRHAQRQSPFAERIAQQRECLQLPLLPTTTIGSFPQTSAIRLARQSFKQGKLSAAEYTEAMHAEIRHAVEVQENLGLDVLVHGEAERNDMVEYFAEQLDGYAFTRFGWVQSYGSRCVKPAVIVGDLGRPQAMTVEWIKYAQGLTDKPMKGMLTGPVTMLMWSFPREDVSREVQARQLALAIRDEVVDLEAAGIRIIQIDEAAFREGLPLRQAAWQGYLDWATEAFRLAASGVRDETQIHTHMCYSEFNDVIESIAAMDADVITIETSRSDMELLEAFERFAYPNEIGPGVYDIHSPRVPDSAEMAGLLRKAARRIPLERLWVNPDCGLKTRAWPETEAALVNMVAAARQLRAELA.

5-methyltetrahydropteroyltri-L-glutamate is bound by residues 16–19 (RELK) and K122. L-homocysteine contacts are provided by residues 443–445 (IGS) and E496. L-methionine-binding positions include 443 to 445 (IGS) and E496. Residues 527 to 528 (RC) and W573 contribute to the 5-methyltetrahydropteroyltri-L-glutamate site. D611 is a binding site for L-homocysteine. An L-methionine-binding site is contributed by D611. E617 provides a ligand contact to 5-methyltetrahydropteroyltri-L-glutamate. 3 residues coordinate Zn(2+): H653, C655, and E677. H706 acts as the Proton donor in catalysis. A Zn(2+)-binding site is contributed by C738.

This sequence belongs to the vitamin-B12 independent methionine synthase family. The cofactor is Zn(2+).

It catalyses the reaction 5-methyltetrahydropteroyltri-L-glutamate + L-homocysteine = tetrahydropteroyltri-L-glutamate + L-methionine. It participates in amino-acid biosynthesis; L-methionine biosynthesis via de novo pathway; L-methionine from L-homocysteine (MetE route): step 1/1. In terms of biological role, catalyzes the transfer of a methyl group from 5-methyltetrahydrofolate to homocysteine resulting in methionine formation. This chain is 5-methyltetrahydropteroyltriglutamate--homocysteine methyltransferase, found in Ectopseudomonas mendocina (strain ymp) (Pseudomonas mendocina).